Here is a 334-residue protein sequence, read N- to C-terminus: Holliday junction branch migration complex subunit RuvB (334 aa).

Positions Met1–Tyr182 are large ATPase domain (RuvB-L). ATP contacts are provided by residues Leu21, Arg22, Gly63, Lys66, Thr67, Thr68, Glu129–Phe131, Arg172, Tyr182, and Arg219. Residue Thr67 participates in Mg(2+) binding. The tract at residues Glu183 to Gln253 is small ATPAse domain (RuvB-S). The head domain (RuvB-H) stretch occupies residues Asp256–Asp334. Arg311 and Arg316 together coordinate DNA.

Belongs to the RuvB family. As to quaternary structure, homohexamer. Forms an RuvA(8)-RuvB(12)-Holliday junction (HJ) complex. HJ DNA is sandwiched between 2 RuvA tetramers; dsDNA enters through RuvA and exits via RuvB. An RuvB hexamer assembles on each DNA strand where it exits the tetramer. Each RuvB hexamer is contacted by two RuvA subunits (via domain III) on 2 adjacent RuvB subunits; this complex drives branch migration. In the full resolvosome a probable DNA-RuvA(4)-RuvB(12)-RuvC(2) complex forms which resolves the HJ.

Its subcellular location is the cytoplasm. The enzyme catalyses ATP + H2O = ADP + phosphate + H(+). In terms of biological role, the RuvA-RuvB-RuvC complex processes Holliday junction (HJ) DNA during genetic recombination and DNA repair, while the RuvA-RuvB complex plays an important role in the rescue of blocked DNA replication forks via replication fork reversal (RFR). RuvA specifically binds to HJ cruciform DNA, conferring on it an open structure. The RuvB hexamer acts as an ATP-dependent pump, pulling dsDNA into and through the RuvAB complex. RuvB forms 2 homohexamers on either side of HJ DNA bound by 1 or 2 RuvA tetramers; 4 subunits per hexamer contact DNA at a time. Coordinated motions by a converter formed by DNA-disengaged RuvB subunits stimulates ATP hydrolysis and nucleotide exchange. Immobilization of the converter enables RuvB to convert the ATP-contained energy into a lever motion, pulling 2 nucleotides of DNA out of the RuvA tetramer per ATP hydrolyzed, thus driving DNA branch migration. The RuvB motors rotate together with the DNA substrate, which together with the progressing nucleotide cycle form the mechanistic basis for DNA recombination by continuous HJ branch migration. Branch migration allows RuvC to scan DNA until it finds its consensus sequence, where it cleaves and resolves cruciform DNA. This Oceanobacillus iheyensis (strain DSM 14371 / CIP 107618 / JCM 11309 / KCTC 3954 / HTE831) protein is Holliday junction branch migration complex subunit RuvB.